The chain runs to 285 residues: Putative cysteine-rich repeat secretory protein 14 (285 aa).

Residues M1–S30 form the signal peptide. Gnk2-homologous domains follow at residues Y37–T143 and R161–F273.

The protein belongs to the cysteine-rich repeat secretory protein family.

It is found in the secreted. In Arabidopsis thaliana (Mouse-ear cress), this protein is Putative cysteine-rich repeat secretory protein 14 (CRRSP14).